The following is a 471-amino-acid chain: MSDITAVLLAAGHGTRMKSDLIKVMHPLAGKPMIGHIVDNVRRAGLEDIVVVVGYQQERIREYLGDRVRYAVQSEQLGTGHAVLQAAGLIDETEGGHVLVMYGDNPFIGPELIERLIRAHVEADAAASLLTAELADPGALGRILRDPATGAFLGSVEYKDATPEQRRIREIWTGVAVFRRAGFTALLNRLDRNNAQGEYYLPQVWEILLQRGEKVQALLLASEEDALAPNDRVELARAEARLRRQINERHMRNGVTIINPDATYIDEDVEIGRDTVIWPFTFIHGKTVIGPHCKIGPMTTIVSSTVAEGCVVEQSVVEESYVGPGCRIGPMAHLRPGCELEGAAEIGNYAELKKAKVGRGVKCHHHSYLGDATIGAGANIGAGTITANYNGVEKFRTEIGSGAFIGTNVNLIAPITVGDGALIAAGSTVGPRLEIPADALVVERAQAVIKEGRAASLKEAWRQRKMNREGT.

The tract at residues 1 to 232 (MSDITAVLLA…EEDALAPNDR (232 aa)) is pyrophosphorylase. UDP-N-acetyl-alpha-D-glucosamine is bound by residues 9-12 (LAAG), K23, Q73, 78-79 (GT), 102-104 (YGD), G141, E157, and N230. A Mg(2+)-binding site is contributed by D104. Residue N230 participates in Mg(2+) binding. The segment at 233 to 253 (VELARAEARLRRQINERHMRN) is linker. An N-acetyltransferase region spans residues 254–471 (GVTIINPDAT…RQRKMNREGT (218 aa)). 2 residues coordinate UDP-N-acetyl-alpha-D-glucosamine: R335 and K353. H365 (proton acceptor) is an active-site residue. UDP-N-acetyl-alpha-D-glucosamine contacts are provided by Y368 and N379. Acetyl-CoA-binding positions include A382, 388–389 (NY), A425, and R444.

This sequence in the N-terminal section; belongs to the N-acetylglucosamine-1-phosphate uridyltransferase family. In the C-terminal section; belongs to the transferase hexapeptide repeat family. As to quaternary structure, homotrimer. Mg(2+) serves as cofactor.

Its subcellular location is the cytoplasm. The catalysed reaction is alpha-D-glucosamine 1-phosphate + acetyl-CoA = N-acetyl-alpha-D-glucosamine 1-phosphate + CoA + H(+). It carries out the reaction N-acetyl-alpha-D-glucosamine 1-phosphate + UTP + H(+) = UDP-N-acetyl-alpha-D-glucosamine + diphosphate. Its pathway is nucleotide-sugar biosynthesis; UDP-N-acetyl-alpha-D-glucosamine biosynthesis; N-acetyl-alpha-D-glucosamine 1-phosphate from alpha-D-glucosamine 6-phosphate (route II): step 2/2. It participates in nucleotide-sugar biosynthesis; UDP-N-acetyl-alpha-D-glucosamine biosynthesis; UDP-N-acetyl-alpha-D-glucosamine from N-acetyl-alpha-D-glucosamine 1-phosphate: step 1/1. It functions in the pathway bacterial outer membrane biogenesis; LPS lipid A biosynthesis. Functionally, catalyzes the last two sequential reactions in the de novo biosynthetic pathway for UDP-N-acetylglucosamine (UDP-GlcNAc). The C-terminal domain catalyzes the transfer of acetyl group from acetyl coenzyme A to glucosamine-1-phosphate (GlcN-1-P) to produce N-acetylglucosamine-1-phosphate (GlcNAc-1-P), which is converted into UDP-GlcNAc by the transfer of uridine 5-monophosphate (from uridine 5-triphosphate), a reaction catalyzed by the N-terminal domain. This chain is Bifunctional protein GlmU, found in Symbiobacterium thermophilum (strain DSM 24528 / JCM 14929 / IAM 14863 / T).